The primary structure comprises 552 residues: Urocanate hydratase (552 aa).

NAD(+)-binding positions include 49 to 50 (GG), Q127, 173 to 175 (GMG), D193, 239 to 240 (NA), 260 to 264 (QTSAH), 270 to 271 (YI), and Y319. The active site involves C407. G489 contacts NAD(+).

The protein belongs to the urocanase family. Requires NAD(+) as cofactor.

The protein localises to the cytoplasm. The catalysed reaction is 4-imidazolone-5-propanoate = trans-urocanate + H2O. It participates in amino-acid degradation; L-histidine degradation into L-glutamate; N-formimidoyl-L-glutamate from L-histidine: step 2/3. In terms of biological role, catalyzes the conversion of urocanate to 4-imidazolone-5-propionate. In Bacillus mycoides (strain KBAB4) (Bacillus weihenstephanensis), this protein is Urocanate hydratase.